We begin with the raw amino-acid sequence, 118 residues long: Large ribosomal subunit protein bL19 (118 aa).

The protein belongs to the bacterial ribosomal protein bL19 family.

In terms of biological role, this protein is located at the 30S-50S ribosomal subunit interface and may play a role in the structure and function of the aminoacyl-tRNA binding site. This is Large ribosomal subunit protein bL19 from Helicobacter pylori (strain G27).